We begin with the raw amino-acid sequence, 91 residues long: MARMIQCAKLGKEAEGLDFPPLPGELGKRIYENVSKEAWQGWLKQQTMLINENRLNMADPRARQYLMKQTEKYFFGEGADQASGYVPPTEG.

This sequence belongs to the Fe(2+)-trafficking protein family.

Could be a mediator in iron transactions between iron acquisition and iron-requiring processes, such as synthesis and/or repair of Fe-S clusters in biosynthetic enzymes. The protein is Probable Fe(2+)-trafficking protein of Burkholderia multivorans (strain ATCC 17616 / 249).